Consider the following 399-residue polypeptide: PCI domain-containing protein 2 (399 aa).

A2 bears the N-acetylalanine mark. Residue S45 is modified to Phosphoserine. The PCI domain occupies 210–391 (ITYKYYVGRK…QKLVVSKQNP (182 aa)).

This sequence belongs to the CSN12 family. Component of the nuclear pore complex (NPC)-associated TREX-2 complex (transcription and export complex 2), composed of at least GANP, 2 copies of ENY2, PCID2, SEM1/DSS1, and either centrin CETN2 or centrin CETN3. The TREX-2 complex also associates with ALYREF/ALY and with the nucleoporin NUP153. Interacts with BRCA2. Interacts with SRCAP chromatin remodeling complex component ZNHIT1; the interaction results in inhibition of SRCAP complex activity, preventing the deposition of histone variant H2AZ1/H2A.Z to lymphoid fate regulator genes and restricting lymphoid lineage commitment. In terms of tissue distribution, highly expressed in bone marrow and haematopoietic progenitor cells but is almost undetectable in mature blood cells.

It is found in the cytoplasm. The protein localises to the nucleus. It localises to the nuclear pore complex. Its function is as follows. Required for B-cell survival through the regulation of the expression of cell-cycle checkpoint MAD2L1 protein during B cell differentiation. As a component of the TREX-2 complex, involved in the export of mRNAs to the cytoplasm through the nuclear pores. Binds and stabilizes BRCA2 and is thus involved in the control of R-loop-associated DNA damage and transcription-associated genomic instability. Blocks the activity of the SRCAP chromatin remodeling complex by interacting with SRCAP complex member ZNHIT1 and inhibiting its interaction with the complex. This prevents the deposition of histone variant H2AZ1/H2A.Z at the nucleosomes of key lymphoid fate regulator genes which suppresses their expression and restricts lymphoid lineage commitment. In Mus musculus (Mouse), this protein is PCI domain-containing protein 2 (Pcid2).